A 1620-amino-acid polypeptide reads, in one-letter code: Myb-like protein X (1620 aa).

Positions 1 to 13 (MSTIGNNASSIGN) are enriched in polar residues. Disordered stretches follow at residues 1 to 57 (MSTI…TTTT), 176 to 204 (TGSG…SNIG), 294 to 318 (FFQD…NMTE), and 450 to 849 (KEEK…TKSA). The span at 28-57 (PPTTTTTTTTTTTTTTTTPTTTTPTTTTTT) shows a compositional bias: low complexity. Residues 177-187 (GSGGIGGGGSG) are compositionally biased toward gly residues. Positions 310–421 (GSGSNNMTEI…CFVNSGDYMN (112 aa)) constitute an SWIRM domain. Basic and acidic residues predominate over residues 450-497 (KEEKERLEREEKERLEREEKQEKEEKERLEKEEKERLEREEKQEKEEK). Positions 498-511 (EEKEEKEENEEKEE) are enriched in acidic residues. Residues 512–568 (KEEKEKEEKEEKEKQEKEDDKEKQENENEQEKIEKKENKNDSQNKEIKENHDKKDET) show a composition bias toward basic and acidic residues. Low complexity predominate over residues 570-598 (DSNNTTTTTTTTTTTSTNTLVAESSSSSS). Residues 606-628 (KEMKEQPVQENKDKEMMETDTTK) show a composition bias toward basic and acidic residues. The segment covering 629–645 (ENNGVETTETTNQTTDS) has biased composition (low complexity). Residues 647-798 (ETDKEMKDQP…EIKKDKLKEN (152 aa)) are compositionally biased toward basic and acidic residues. Residues 799-834 (EEVEGEIEGENDEGEVVEEDEDEEMEIEEDEEDEED) show a composition bias toward acidic residues. The SANT domain maps to 925 to 977 (PEEFGWTDIETLLLLEGIEIFRDNWQEISDYIGGSKTPEQCLTHFIRLPIEDE). A disordered region spans residues 1049–1506 (QPSKEELERI…DDDEDVEMET (458 aa)). Basic and acidic residues-rich tracts occupy residues 1051 to 1195 (SKEE…DKSD), 1219 to 1255 (ETVE…KDDN), and 1264 to 1302 (HNKE…EKDL). Low complexity predominate over residues 1303–1325 (NNLSESQSSNDQSKSNEQMSSDN). The segment covering 1338–1350 (TQITSKEQNITTD) has biased composition (polar residues). 2 stretches are compositionally biased toward low complexity: residues 1358–1382 (TPTT…TTNT) and 1390–1416 (NETN…ESNN). Acidic residues-rich tracts occupy residues 1467 to 1481 (EENE…ENDL) and 1493 to 1504 (VGEEDDDEDVEM).

It localises to the nucleus. The polypeptide is Myb-like protein X (mybX) (Dictyostelium discoideum (Social amoeba)).